We begin with the raw amino-acid sequence, 518 residues long: Circadian clock oscillator protein KaiC (518 aa).

Positions 1 to 247 constitute a KaiC 1 domain; that stretch reads MTNLPEHQSS…FTINNGINIF (247 aa). ATP is bound by residues serine 49, glycine 50, threonine 51, glycine 52, lysine 53, threonine 54, and leucine 55. Threonine 54 contributes to the Mg(2+) binding site. The active-site Proton acceptor in CI (KaiC 1) is the glutamate 78. Serine 90 serves as a coordination point for ATP. The tract at residues 116 to 123 is B-loop, required to bind KaiB and SasA; that stretch reads QEVAGDFD. ATP-binding residues include lysine 225, leucine 226, arginine 227, threonine 229, and histidine 231. Positions 248-260 are linker; sequence PLGAMRLTQRSSN. The 258-residue stretch at 261–518 folds into the KaiC 2 domain; sequence VRVSSGVKTL…AKGMQDLESE (258 aa). ATP is bound by residues threonine 290, glycine 291, threonine 292, glycine 293, lysine 294, threonine 295, and leucine 296. Threonine 295 is a Mg(2+) binding site. Residue glutamate 318 participates in Mg(2+) binding. Glutamate 318 serves as the catalytic Proton acceptor in CII (KaiC 2). Tryptophan 331 is an ATP binding site. Serine 431 bears the Phosphoserine; by autocatalysis mark. Threonine 432 is subject to Phosphothreonine; by autocatalysis. ATP is bound by residues arginine 451, lysine 457, methionine 458, arginine 459, serine 461, histidine 463, and lysine 465. The A-loop, interacts with KaiA stretch occupies residues 488-497; it reads GIISGTPTRI.

This sequence belongs to the KaiC family. As to quaternary structure, homohexamer resembling 2 stacked donuts rings with a central pore nearly blocked on one side; hexamerization is dependent on ATP-binding. Binds 2 ATP per monomer, at the subunit interface on each ring. The KaiABC complex composition changes during the circadian cycle to control KaiC phosphorylation. Complexes KaiC(6), KaiA(2-4):KaiC(6), KaiB(6):KaiC(6) and KaiC(6):KaiB(6):KaiA(12) are among the most important forms, many form cooperatively. Interacts with SasA, probably as 1 SasA trimer:1 KaiC homohexamer, has highest affinity for unphosphorylated SasA. The CI domain binds to KaiB and SasA; as they have a similar fold they compete for the same site on CI. KaiB assumes a thioredoxin-like form called KaiB(fs) when bound to KaiC. Mg(2+) is required as a cofactor. Phosphorylated on serine/threonine residues by autocatalysis. Both phosphorylated and unphosphorylated forms exist. Both autophosphorylates and autodephosphorylates. Phosphorylated form correlates with clock speed. In terms of processing, phosphorylated on serine and threonine residues by autocatalysis. Has a 4 step phosphorylation cycle; the autokinase acts first on Thr-432, then Ser-431. When Ser-431 is modified KaiC switches to an autophosphatase mode, acting first on phospho-Thr-432 then phospho-Ser-431.

It catalyses the reaction L-seryl-[protein] + ATP = O-phospho-L-seryl-[protein] + ADP + H(+). It carries out the reaction L-threonyl-[protein] + ATP = O-phospho-L-threonyl-[protein] + ADP + H(+). The catalysed reaction is ATP + H2O = ADP + phosphate + H(+). The interaction with KaiA enhances its phosphorylation status, while the interaction with KaiB decreases it. Functionally, central component of the KaiABC oscillator complex, which constitutes the main circadian regulator in cyanobacteria. Complex composition changes during the circadian cycle to control KaiC phosphorylation. KaiA stimulates KaiC autophosphorylation, while KaiB sequesters KaiA, leading to KaiC autodephosphorylation. Clock output pathways impact the RpaA transcriptional regulator. KaiC enhances the autophosphorylation activity of SasA, which then transfers its phosphate group to RpaA to activate it. KaiB and KaiC together enhance the phospho-RpaA dephosphatase activity of CikA. Stimulates SasA autophosphorylation. Fully phosphorylated KaiC (tested with phosphomimetic Asp-431-432-Asp) is the best stimulant, requires the ATPase activity of the CII domain. Unphosphorylated SasA associates with KaiC and its autophosphorylation activity is enhanced. Phospho-SasA is released and associates with RpaA, transferring its phosphate group. Formation of the KaiA:KaiB complex is promoted by KaiC, helping switch KaiC from its autophosphorylation to autodephosphatase function. In terms of biological role, has a weak, temperature-independent ATPase activity (about 14 molecules of ATP per day) that defines the circadian period. ATPase activity is mostly contributed by the CI domain; the CII domain augments the activity. The addition of KaiA increases activity. ATPase is inhibited during the KaiC phosphorylating phase and activated during the KaiC dephosphorylating phase. The polypeptide is Circadian clock oscillator protein KaiC (Thermosynechococcus vestitus (strain NIES-2133 / IAM M-273 / BP-1)).